Consider the following 359-residue polypeptide: Nicotinate-nucleotide--dimethylbenzimidazole phosphoribosyltransferase (359 aa).

Glu318 functions as the Proton acceptor in the catalytic mechanism.

The protein belongs to the CobT family. As to quaternary structure, homodimer.

It carries out the reaction 5,6-dimethylbenzimidazole + nicotinate beta-D-ribonucleotide = alpha-ribazole 5'-phosphate + nicotinate + H(+). It participates in nucleoside biosynthesis; alpha-ribazole biosynthesis; alpha-ribazole from 5,6-dimethylbenzimidazole: step 1/2. Catalyzes the synthesis of alpha-ribazole-5'-phosphate from nicotinate mononucleotide (NAMN) and 5,6-dimethylbenzimidazole (DMB). The chain is Nicotinate-nucleotide--dimethylbenzimidazole phosphoribosyltransferase from Escherichia coli O127:H6 (strain E2348/69 / EPEC).